The chain runs to 375 residues: Phytanoyl-CoA hydroxylase-interacting protein-like (375 aa).

Phosphoserine is present on residues serine 11, serine 12, and serine 15. Asparagine 22 is a glycosylation site (N-linked (GlcNAc...) asparagine). A Phosphoserine modification is found at serine 24. A glycan (N-linked (GlcNAc...) asparagine) is linked at asparagine 36. A Fibronectin type-III domain is found at 51–160 (VPHNIKINNI…EIIEFCTADY (110 aa)).

It belongs to the PHYHIP family.

Functionally, may play a role in the development of the central system. This is Phytanoyl-CoA hydroxylase-interacting protein-like (Phyhipl) from Mus musculus (Mouse).